Here is a 137-residue protein sequence, read N- to C-terminus: Small integral membrane protein 9 (137 aa).

A signal peptide spans 1–23 (MKPLKLFCIGLLLCPLVCLLLET). The Extracellular segment spans residues 24–84 (APPPSALLTL…NHLSDFFKSS (61 aa)). Residues 85-105 (IPPAAIFALFVTTAIMRAAIV) traverse the membrane as a helical segment. Residues 106–137 (NKRLEEPHRQWTIDQRSSLEMQNMNLIKLFGG) are Cytoplasmic-facing.

The protein localises to the cell membrane. The chain is Small integral membrane protein 9 (Smim9) from Mus musculus (Mouse).